The following is a 31-amino-acid chain: Photosystem II reaction center protein T (31 aa).

Residues 3–23 (SVAYILILTMALAVLFFAIAF) form a helical membrane-spanning segment.

Belongs to the PsbT family. As to quaternary structure, PSII is composed of 1 copy each of membrane proteins PsbA, PsbB, PsbC, PsbD, PsbE, PsbF, PsbH, PsbI, PsbJ, PsbK, PsbL, PsbM, PsbT, PsbX, PsbY, PsbZ, Psb30/Ycf12, peripheral proteins PsbO, CyanoQ (PsbQ), PsbU, PsbV and a large number of cofactors. It forms dimeric complexes.

The protein localises to the cellular thylakoid membrane. Its function is as follows. Found at the monomer-monomer interface of the photosystem II (PS II) dimer, plays a role in assembly and dimerization of PSII. PSII is a light-driven water plastoquinone oxidoreductase, using light energy to abstract electrons from H(2)O, generating a proton gradient subsequently used for ATP formation. The chain is Photosystem II reaction center protein T from Gloeothece citriformis (strain PCC 7424) (Cyanothece sp. (strain PCC 7424)).